The following is a 260-amino-acid chain: Proline-rich protein 33 (260 aa).

The disordered stretch occupies residues 29 to 132 (GVQTVSPRPE…KVAPKPSRSG (104 aa)). Positions 73–83 (GPSPYSPPPAA) are enriched in pro residues.

This Mus musculus (Mouse) protein is Proline-rich protein 33 (Prr33).